A 190-amino-acid polypeptide reads, in one-letter code: Protein E6C (190 aa).

Positions 1-15 (MFGVAKPPPSPIPKP) are enriched in pro residues. Disordered regions lie at residues 1–110 (MFGV…EGRR) and 160–190 (PRTP…PPDD). The span at 36–46 (ARQRASTRHRP) shows a compositional bias: basic residues. Pro residues-rich tracts occupy residues 162 to 171 (TPGPVAPIPE) and 181 to 190 (TRTPPPPPDD).

This chain is Protein E6C (13), found in Equus caballus (Horse).